A 326-amino-acid polypeptide reads, in one-letter code: MNMTRLLAVIGIFIATAGIAAPVSADTYPARPIQMIVPFPPGGSTDVMARVLARTLQDSLGQPVVVQNRAGAGGVIGTDATAKSAADGYTLLLSSSSAPLAVGLSLMPSIPYKVLEDLVPVSMVGDVPLVLVTNPKLKLDSLDALIAQCKARPGEVAFALNALGSQAHLLTELFQLRTGAAINMIPYKGSGPAVVDLLGGVVAADIENMPAVLEHIRSGNLRALAILSSDRSTHFPAVPTMAELGYPEFVASPWFAVMAPKGTDPKIIVLLNRHINEALQSKAVVEAFAAQGATPVIATPDQTRGFIADEIQRWAGVVRETGAKLK.

The signal sequence occupies residues 1-25 (MNMTRLLAVIGIFIATAGIAAPVSA).

The protein belongs to the UPF0065 (bug) family.

Its subcellular location is the periplasm. The polypeptide is Protein BugT (bugT) (Bordetella pertussis (strain Tohama I / ATCC BAA-589 / NCTC 13251)).